We begin with the raw amino-acid sequence, 317 residues long: Metaxin-1 (317 aa).

Glycyl lysine isopeptide (Lys-Gly) (interchain with G-Cter in ubiquitin) cross-links involve residues K38, K41, K78, and K168. The helical transmembrane segment at 272–292 (ILSVLAGLAAMVGYALLSGIV) threads the bilayer.

The protein belongs to the metaxin family. Interacts with MTX2/metaxin-2. Associates with the mitochondrial contact site and cristae organizing system (MICOS) complex, composed of at least MICOS10/MIC10, CHCHD3/MIC19, CHCHD6/MIC25, APOOL/MIC27, IMMT/MIC60, APOO/MIC23/MIC26 and QIL1/MIC13. This complex was also known under the names MINOS or MitOS complex. The MICOS complex associates with mitochondrial outer membrane proteins SAMM50, MTX1 and MTX2 (together described as components of the mitochondrial outer membrane sorting assembly machinery (SAM) complex) and DNAJC11, mitochondrial inner membrane protein TMEM11 and with HSPA9. The MICOS and SAM complexes together with DNAJC11 are part of a large protein complex spanning both membranes termed the mitochondrial intermembrane space bridging (MIB) complex. Interacts with ARMC1. In terms of processing, ubiquitinated by PRKN during mitophagy, leading to its degradation and enhancement of mitophagy. Deubiquitinated by USP30. In terms of tissue distribution, ubiquitous. Higher levels are seen in the kidney as compared to other tissues.

It localises to the mitochondrion outer membrane. In terms of biological role, involved in transport of proteins into the mitochondrion. Essential for embryonic development. This Mus musculus (Mouse) protein is Metaxin-1 (Mtx1).